Here is a 416-residue protein sequence, read N- to C-terminus: Basic salivary proline-rich protein 2 (416 aa).

An N-terminal signal peptide occupies residues 1–16 (MLLILLSVALLALSSA). Gln17 carries the pyrrolidone carboxylic acid modification. Positions 19-28 (LNEDVSQEES) are enriched in polar residues. The disordered stretch occupies residues 19 to 416 (LNEDVSQEES…QGGRPSRPPQ (398 aa)). A Phosphoserine modification is found at Ser24. Over residues 34–47 (GNPQGAPPQGGNKP) the composition is skewed to low complexity. Composition is skewed to pro residues over residues 48 to 104 (QGPP…PPPQ) and 112 to 165 (RSPP…PPPQ). A Phosphoserine modification is found at Ser52. Tandem repeats lie at residues 53-72 (PPGK…QGPP), 74-93 (PPGK…QGPP), 94-113 (PPGK…SPRS), 114-133 (PPGK…QGPP), 135-154 (PPGK…QGPP), 155-174 (PPGK…RSSR), 176-195 (PPGK…QGPP), 197-216 (PPGK…QGPP), 217-236 (PPGK…QSAR), 238-257 (PPGK…QGPP), 259-278 (PPGK…QGPP), 279-298 (PPGK…RSSR), 300-319 (PPGK…QGPP), 321-340 (PPGK…QGPP), and 341-360 (PPGK…RSAR). The segment at 53–360 (PPGKPQGPPP…QGGSKSRSAR (308 aa)) is 15 X 20 AA approximate tandem repeats of P-P-G-K-P-Q-G-P-P-P-Q-G-[GD]-[NKS]-[KSQ]-[PRS]-[QRS] [GPS]-[PSAR]-[PSR]. A glycan (N-linked (GlcNAc...) asparagine) is linked at Asn168. Pro residues predominate over residues 177-227 (PGKPQGPPPQGGNQPQGPPPPPGKPQGPPPQGGNKPQGPPPPGKPQGPPPQ). N-linked (GlcNAc...) asparagine glycosylation occurs at Asn230. Ser232 is a glycosylation site (O-linked (Hex) serine). The span at 239–289 (PGKPQGPPPQGGNQPQGPPPPPGKPQGPPPQGGNKPQGPPPPGKPQGPPPQ) shows a compositional bias: pro residues. Asn272 carries N-linked (GlcNAc...) asparagine glycosylation. Positions 290–300 (GGSKSRSSRSP) are enriched in low complexity. Composition is skewed to pro residues over residues 301 to 351 (PGKP…PPPQ) and 378 to 416 (QGPP…RPPQ).

N- and O-glycosylated. In head and neck cancer patients, O-glycosylated with glucosylgalactosyl carbohydrate moiety. This modification would require prior hydroxylation on the lysine residue. Post-translationally, proteolytically cleaved at the tripeptide Xaa-Pro-Gln, where Xaa in the P(3) position is mostly lysine. The endoprotease may be of microbial origin. In terms of processing, pyroglutamate formation occurs on terminal Gln residues of cleaved peptides. Pyroglutamate formation found on at least Gln-398 and Gln-400.

The protein localises to the secreted. The sequence is that of Basic salivary proline-rich protein 2 (PRB2) from Homo sapiens (Human).